The sequence spans 602 residues: Elongation factor 4 (602 aa).

A tr-type G domain is found at 5–187 (DHIRNFSIIA…ALVKRIPAPK (183 aa)). GTP contacts are provided by residues 17–22 (DHGKST) and 134–137 (NKID).

It belongs to the TRAFAC class translation factor GTPase superfamily. Classic translation factor GTPase family. LepA subfamily.

It localises to the cell inner membrane. It carries out the reaction GTP + H2O = GDP + phosphate + H(+). Functionally, required for accurate and efficient protein synthesis under certain stress conditions. May act as a fidelity factor of the translation reaction, by catalyzing a one-codon backward translocation of tRNAs on improperly translocated ribosomes. Back-translocation proceeds from a post-translocation (POST) complex to a pre-translocation (PRE) complex, thus giving elongation factor G a second chance to translocate the tRNAs correctly. Binds to ribosomes in a GTP-dependent manner. The chain is Elongation factor 4 from Zymomonas mobilis subsp. mobilis (strain ATCC 31821 / ZM4 / CP4).